The chain runs to 185 residues: Threonylcarbamoyl-AMP synthase (185 aa).

One can recognise a YrdC-like domain in the interval 1 to 185 (MDNFEQVLNA…AKTSQILRQG (185 aa)). The disordered stretch occupies residues 163-185 (ETSGRDKPSEIRDAKTSQILRQG). A compositionally biased stretch (basic and acidic residues) spans 164–177 (TSGRDKPSEIRDAK).

It belongs to the SUA5 family. TsaC subfamily.

It localises to the cytoplasm. The enzyme catalyses L-threonine + hydrogencarbonate + ATP = L-threonylcarbamoyladenylate + diphosphate + H2O. In terms of biological role, required for the formation of a threonylcarbamoyl group on adenosine at position 37 (t(6)A37) in tRNAs that read codons beginning with adenine. Catalyzes the conversion of L-threonine, HCO(3)(-)/CO(2) and ATP to give threonylcarbamoyl-AMP (TC-AMP) as the acyladenylate intermediate, with the release of diphosphate. The protein is Threonylcarbamoyl-AMP synthase of Vibrio parahaemolyticus serotype O3:K6 (strain RIMD 2210633).